The chain runs to 151 residues: Linear element protein Mug20 (151 aa).

The stretch at 56–140 (EEKLRALDKL…CAMEKLKMIE (85 aa)) forms a coiled coil.

Component of linear elements (LinEs), which are similar to synaptonemal complexes, at least composed of rec27, rec25, rec10 and mug20. Interacts with rec10.

It is found in the cytoplasm. Its subcellular location is the nucleus. It localises to the chromosome. During meiotic DNA recombination, binds to and may help activate DNA double-strand break (DSB) hotspot sites. This is Linear element protein Mug20 from Schizosaccharomyces pombe (strain 972 / ATCC 24843) (Fission yeast).